The chain runs to 460 residues: UDP-N-acetylmuramoylalanine--D-glutamate ligase (460 aa).

123 to 129 (GTNGKTT) contributes to the ATP binding site.

It belongs to the MurCDEF family.

It is found in the cytoplasm. It catalyses the reaction UDP-N-acetyl-alpha-D-muramoyl-L-alanine + D-glutamate + ATP = UDP-N-acetyl-alpha-D-muramoyl-L-alanyl-D-glutamate + ADP + phosphate + H(+). The protein operates within cell wall biogenesis; peptidoglycan biosynthesis. Functionally, cell wall formation. Catalyzes the addition of glutamate to the nucleotide precursor UDP-N-acetylmuramoyl-L-alanine (UMA). The chain is UDP-N-acetylmuramoylalanine--D-glutamate ligase (murD) from Enterococcus hirae.